The sequence spans 537 residues: Phosphoenolpyruvate carboxykinase (ATP) (537 aa).

Substrate is bound by residues arginine 61, tyrosine 195, and lysine 201. Residues lysine 201, histidine 220, and 236 to 244 (GLSGTGKTT) contribute to the ATP site. Mn(2+) is bound by residues lysine 201 and histidine 220. Residue aspartate 257 coordinates Mn(2+). Residues glutamate 285, arginine 323, and threonine 448 each coordinate ATP. A substrate-binding site is contributed by arginine 323.

This sequence belongs to the phosphoenolpyruvate carboxykinase (ATP) family. Requires Mn(2+) as cofactor.

It localises to the cytoplasm. The catalysed reaction is oxaloacetate + ATP = phosphoenolpyruvate + ADP + CO2. The protein operates within carbohydrate biosynthesis; gluconeogenesis. Involved in the gluconeogenesis. Catalyzes the conversion of oxaloacetate (OAA) to phosphoenolpyruvate (PEP) through direct phosphoryl transfer between the nucleoside triphosphate and OAA. The polypeptide is Phosphoenolpyruvate carboxykinase (ATP) (Parvibaculum lavamentivorans (strain DS-1 / DSM 13023 / NCIMB 13966)).